The following is a 45-amino-acid chain: DSCSNIIQPLTPCLNYVRALGQFSDIDIQTIPEQCGISATLPPID.

This sequence belongs to the plant LTP family. Expressed in pollen.

Plant non-specific lipid-transfer proteins transfer phospholipids as well as galactolipids across membranes. May play a role in wax or cutin deposition in the cell walls of expanding epidermal cells and certain secretory tissues. The protein is Non-specific lipid-transfer protein of Broussonetia papyrifera (Paper mulberry).